The chain runs to 20 residues: Apidaecin 2+ (20 aa).

A compositionally biased stretch (pro residues) spans 1–13 (GKPNKPRPAPIKP). The disordered stretch occupies residues 1-20 (GKPNKPRPAPIKPRPPHPRL).

Its subcellular location is the secreted. Its function is as follows. Antimicrobial peptide active against many Gram-negative enterobacterial and plant-associated bacterial species. Not active against other bacterial species like H.pylori, P.mirabilis, B.pertussis or N.gonorrhoeae. This chain is Apidaecin 2+, found in Pimpla disparis (Parasitic wasp).